The primary structure comprises 254 residues: 5-oxoprolinase subunit A (254 aa).

This sequence belongs to the LamB/PxpA family. As to quaternary structure, forms a complex composed of PxpA, PxpB and PxpC.

It catalyses the reaction 5-oxo-L-proline + ATP + 2 H2O = L-glutamate + ADP + phosphate + H(+). In terms of biological role, catalyzes the cleavage of 5-oxoproline to form L-glutamate coupled to the hydrolysis of ATP to ADP and inorganic phosphate. The sequence is that of 5-oxoprolinase subunit A from Brevibacillus brevis (strain 47 / JCM 6285 / NBRC 100599).